The primary structure comprises 561 residues: Ankyrin repeat protein OPG189 (561 aa).

ANK repeat units lie at residues 68–98 (YGENILHIYFIDAANTNIMIFFLDRVLNINK), 172–208 (YGCTLLHRCIYNYKKSESESYNELIKILLNNGSDVDK), 212–242 (YGNTPFILLCKHDIDNAELFEICLENANIDS), 246–275 (NGYTPLHYVSCRNKYDFVKLLISKGANVNA), 279–307 (FGTTPFYCGIIHGISLIKLYLESDTELEI), 342–371 (YNETSIYDAVSYNAYNTLVYLLNRNGDFET), and 375–404 (SGCTCISEAVANNNKIIMDILLSKRPSLKI).

Belongs to the orthopoxvirus OPG189 protein family.

Functionally, contributes to viral release without involving rearrangement of host actin. The polypeptide is Ankyrin repeat protein OPG189 (OPG189) (Cynomys gunnisoni (Gunnison's prairie dog)).